The following is a 407-amino-acid chain: Glucose-1-phosphate adenylyltransferase 2 (407 aa).

Alpha-D-glucose 1-phosphate is bound by residues Tyr97, Gly162, Glu177–Lys178, and Ser195.

Belongs to the bacterial/plant glucose-1-phosphate adenylyltransferase family. In terms of assembly, homotetramer.

It carries out the reaction alpha-D-glucose 1-phosphate + ATP + H(+) = ADP-alpha-D-glucose + diphosphate. Its pathway is glycan biosynthesis; glycogen biosynthesis. Functionally, involved in the biosynthesis of ADP-glucose, a building block required for the elongation reactions to produce glycogen. Catalyzes the reaction between ATP and alpha-D-glucose 1-phosphate (G1P) to produce pyrophosphate and ADP-Glc. The sequence is that of Glucose-1-phosphate adenylyltransferase 2 from Vibrio cholerae serotype O1 (strain ATCC 39315 / El Tor Inaba N16961).